Consider the following 105-residue polypeptide: ATP synthase subunit c (105 aa).

A run of 3 helical transmembrane segments spans residues 3–23 (FLSL…GGMG), 32–52 (SILG…IGMG), and 78–98 (VAMA…IIAI).

Belongs to the ATPase C chain family. As to quaternary structure, F-type ATPases have 2 components, F(1) - the catalytic core - and F(0) - the membrane proton channel. F(1) has five subunits: alpha(3), beta(3), gamma(1), delta(1), epsilon(1). F(0) has three main subunits: a(1), b(2) and c(10-14). The alpha and beta chains form an alternating ring which encloses part of the gamma chain. F(1) is attached to F(0) by a central stalk formed by the gamma and epsilon chains, while a peripheral stalk is formed by the delta and b chains.

It is found in the cell inner membrane. Its function is as follows. F(1)F(0) ATP synthase produces ATP from ADP in the presence of a proton or sodium gradient. F-type ATPases consist of two structural domains, F(1) containing the extramembraneous catalytic core and F(0) containing the membrane proton channel, linked together by a central stalk and a peripheral stalk. During catalysis, ATP synthesis in the catalytic domain of F(1) is coupled via a rotary mechanism of the central stalk subunits to proton translocation. In terms of biological role, key component of the F(0) channel; it plays a direct role in translocation across the membrane. A homomeric c-ring of between 10-14 subunits forms the central stalk rotor element with the F(1) delta and epsilon subunits. This chain is ATP synthase subunit c, found in Helicobacter pylori (strain Shi470).